The sequence spans 279 residues: Dermonecrotic toxin LrSicTox-alphaIA1i (279 aa).

The active site involves His11. The Mg(2+) site is built by Glu31 and Asp33. Residue His47 is the Nucleophile of the active site. 2 disulfide bridges follow: Cys51–Cys57 and Cys53–Cys196. Asp91 lines the Mg(2+) pocket. Asn256 carries an N-linked (GlcNAc...) asparagine glycan.

Belongs to the arthropod phospholipase D family. Class II subfamily. Requires Mg(2+) as cofactor. As to expression, expressed by the venom gland.

It localises to the secreted. It catalyses the reaction an N-(acyl)-sphingosylphosphocholine = an N-(acyl)-sphingosyl-1,3-cyclic phosphate + choline. The enzyme catalyses an N-(acyl)-sphingosylphosphoethanolamine = an N-(acyl)-sphingosyl-1,3-cyclic phosphate + ethanolamine. The catalysed reaction is a 1-acyl-sn-glycero-3-phosphocholine = a 1-acyl-sn-glycero-2,3-cyclic phosphate + choline. It carries out the reaction a 1-acyl-sn-glycero-3-phosphoethanolamine = a 1-acyl-sn-glycero-2,3-cyclic phosphate + ethanolamine. With respect to regulation, inhibited with low affinity by edelfosine. Functionally, dermonecrotic toxins cleave the phosphodiester linkage between the phosphate and headgroup of certain phospholipids (sphingolipid and lysolipid substrates), forming an alcohol (often choline) and a cyclic phosphate. This toxin acts on sphingomyelin (SM). It also acts on a broad range of lysophospholipids, like lysophosphatidylinositol (LPI), lysophosphatidylglycerol (LPG), lysophosphatidylethanolamine (LPE), lysobisphosphatidic acid (LBPA), lysophosphatidylserine (LPS) and lysophosphatidylcholines (LPC) of varying chain lengths. The substrate preference is LPI &gt; LPG &gt; LPS &gt; LPC &gt;&gt; LPE, LBPA. Furthermore, the enzyme also act on cyclic phosphatidic acid and lyso-platelet activating factor (LPAF, an alkyl-LPC). The enzyme does not act on sphingosylphosphorylcholine (SPC, also known as lyso-sphingomyelin) and PAF. The toxin may also act on ceramide phosphoethanolamine (CPE). It acts by transphosphatidylation, releasing exclusively cyclic phosphate products as second products. It does not exhibit detectable PLA1/2 activity. It induces dose-dependent hemolysis and dermonecrosis. Also induces increased vascular permeability, edema, inflammatory response, and platelet aggregation. The chain is Dermonecrotic toxin LrSicTox-alphaIA1i from Loxosceles reclusa (Brown recluse spider).